Here is a 128-residue protein sequence, read N- to C-terminus: Large ribosomal subunit protein bL17 (128 aa).

Belongs to the bacterial ribosomal protein bL17 family. As to quaternary structure, part of the 50S ribosomal subunit. Contacts protein L32.

The polypeptide is Large ribosomal subunit protein bL17 (Haemophilus influenzae (strain 86-028NP)).